A 638-amino-acid chain; its full sequence is Threonine--tRNA ligase (638 aa).

The TGS domain maps to 1–59 (MEKIKVKIKGKEYEVEKGTPLGKIFELAGIKDALGGVINGKIIDLQTPVRESGEIKPVY). Residues 243 to 536 (DHRRLGKELE…LLEHYAGLLP (294 aa)) form a catalytic region. 3 residues coordinate Zn(2+): C336, H387, and H513.

The protein belongs to the class-II aminoacyl-tRNA synthetase family. Homodimer. It depends on Zn(2+) as a cofactor.

It is found in the cytoplasm. It catalyses the reaction tRNA(Thr) + L-threonine + ATP = L-threonyl-tRNA(Thr) + AMP + diphosphate + H(+). In terms of biological role, catalyzes the attachment of threonine to tRNA(Thr) in a two-step reaction: L-threonine is first activated by ATP to form Thr-AMP and then transferred to the acceptor end of tRNA(Thr). Also edits incorrectly charged L-seryl-tRNA(Thr). The chain is Threonine--tRNA ligase from Aquifex aeolicus (strain VF5).